The following is a 104-amino-acid chain: L-rhamnose mutarotase (104 aa).

Residue tyrosine 18 coordinates substrate. Histidine 22 acts as the Proton donor in catalysis. Substrate is bound by residues tyrosine 41 and 76–77 (WW).

It belongs to the rhamnose mutarotase family. In terms of assembly, homodimer.

Its subcellular location is the cytoplasm. The enzyme catalyses alpha-L-rhamnose = beta-L-rhamnose. Its pathway is carbohydrate metabolism; L-rhamnose metabolism. In terms of biological role, involved in the anomeric conversion of L-rhamnose. The protein is L-rhamnose mutarotase of Salmonella agona (strain SL483).